We begin with the raw amino-acid sequence, 776 residues long: DNA topoisomerase 1 (776 aa).

A Toprim domain is found at 1 to 111; the sequence is MKLVIVESPA…VKSDDFFKRV (111 aa). Mg(2+) is bound by residues glutamate 7 and aspartate 80. A Topo IA-type catalytic domain is found at 132 to 568; that stretch reads DTNLVNAQQA…FWSGFNHNIE (437 aa). The tract at residues 166-171 is interaction with DNA; sequence SAGRVQ. Residue tyrosine 304 is the O-(5'-phospho-DNA)-tyrosine intermediate of the active site. Residues 600 to 627 form a C4-type zinc finger; sequence CPSCNTGELSLKLGKFGAFLACSNYPEC.

This sequence belongs to the type IA topoisomerase family. In terms of assembly, monomer. The cofactor is Mg(2+).

The catalysed reaction is ATP-independent breakage of single-stranded DNA, followed by passage and rejoining.. Its function is as follows. Releases the supercoiling and torsional tension of DNA, which is introduced during the DNA replication and transcription, by transiently cleaving and rejoining one strand of the DNA duplex. Introduces a single-strand break via transesterification at a target site in duplex DNA. The scissile phosphodiester is attacked by the catalytic tyrosine of the enzyme, resulting in the formation of a DNA-(5'-phosphotyrosyl)-enzyme intermediate and the expulsion of a 3'-OH DNA strand. The free DNA strand then undergoes passage around the unbroken strand, thus removing DNA supercoils. Finally, in the religation step, the DNA 3'-OH attacks the covalent intermediate to expel the active-site tyrosine and restore the DNA phosphodiester backbone. This chain is DNA topoisomerase 1, found in Rickettsia conorii (strain ATCC VR-613 / Malish 7).